The chain runs to 341 residues: NADH-ubiquinone oxidoreductase chain 2 (341 aa).

The next 9 helical transmembrane spans lie at 8 to 28 (ILFI…NSWL), 60 to 80 (YFLT…LLML), 95 to 115 (MIIM…FWFP), 121 to 141 (LTWM…LMLI), 146 to 166 (IKYL…IGGL), 195 to 215 (SIWL…TFMF), 238 to 258 (FTLF…GFLP), 273 to 293 (FMLT…LRIC), and 321 to 341 (MIMT…YFMF).

It belongs to the complex I subunit 2 family.

It is found in the mitochondrion inner membrane. The enzyme catalyses a ubiquinone + NADH + 5 H(+)(in) = a ubiquinol + NAD(+) + 4 H(+)(out). Core subunit of the mitochondrial membrane respiratory chain NADH dehydrogenase (Complex I) that is believed to belong to the minimal assembly required for catalysis. Complex I functions in the transfer of electrons from NADH to the respiratory chain. The immediate electron acceptor for the enzyme is believed to be ubiquinone. The sequence is that of NADH-ubiquinone oxidoreductase chain 2 (mt:ND2) from Drosophila melanogaster (Fruit fly).